The sequence spans 52 residues: Proteinase inhibitor (52 aa).

A Pyrrolidone carboxylic acid modification is found at Gln1. 4 disulfides stabilise this stretch: Cys3–Cys40, Cys6–Cys24, Cys7–Cys36, and Cys13–Cys49.

This sequence belongs to the protease inhibitor I20 (potato type II proteinase inhibitor) family.

The protein localises to the secreted. The sequence is that of Proteinase inhibitor from Solanum melongena (Eggplant).